The following is a 417-amino-acid chain: Pygopus homolog 1 (417 aa).

The segment covering 1-11 (MSAEQDKEPIA) has biased composition (basic and acidic residues). Disordered regions lie at residues 1-71 (MSAE…AANP), 175-265 (HFRQ…MEDP), and 284-318 (ENSR…CTPD). The span at 18–27 (GDSGLDGLGG) shows a compositional bias: gly residues. Residues 35 to 41 (PDKKKRK) carry the Nuclear localization signal motif. 3 stretches are compositionally biased toward polar residues: residues 180–221 (SAEN…TNHS), 240–256 (DFTQ…SSTH), and 284–305 (ENSR…QNKP). The PHD-type zinc-finger motif lies at 338 to 396 (VYPCGICTNEVNDDQDAILCEASCQKWFHRICTGMTETAYGLLTAEASAVWGCDTCMAD). The interaction with H3K4me2 stretch occupies residues 339-386 (YPCGICTNEVNDDQDAILCEASCQKWFHRICTGMTETAYGLLTAEASA). Positions 371-389 (GMTETAYGLLTAEASAVWG) are interaction with BCL9.

Interacts with BCL9 via The PHD-type zinc finger motiv, and thereby becomes part of the nuclear beta-catenin/TCF complex. Found in a complex with BCL9L, CDC73, CTNNB1 and PYGO1. Interacts with histone H3 mono-, di- or tri-methylated at 'Lys4' (H3K4me1, H3K4me2, H3K4me3); the interaction is enhanced by the interaction with BCL9.

The protein resides in the nucleus. Functionally, involved in signal transduction through the Wnt pathway. This Mus musculus (Mouse) protein is Pygopus homolog 1 (Pygo1).